The primary structure comprises 143 residues: Anti-sigma F factor (143 aa).

The protein belongs to the anti-sigma-factor family.

It carries out the reaction L-seryl-[protein] + ATP = O-phospho-L-seryl-[protein] + ADP + H(+). The enzyme catalyses L-threonyl-[protein] + ATP = O-phospho-L-threonyl-[protein] + ADP + H(+). In terms of biological role, binds to sigma F and blocks its ability to form an RNA polymerase holoenzyme (E-sigma F). Phosphorylates SpoIIAA on a serine residue. This phosphorylation may enable SpoIIAA to act as an anti-anti-sigma factor that counteracts SpoIIAB and thus releases sigma F from inhibition. This chain is Anti-sigma F factor, found in Clostridium beijerinckii (strain ATCC 51743 / NCIMB 8052) (Clostridium acetobutylicum).